The primary structure comprises 158 residues: NAD(P)H-quinone oxidoreductase subunit J, chloroplastic (158 aa).

The protein belongs to the complex I 30 kDa subunit family. NDH is composed of at least 16 different subunits, 5 of which are encoded in the nucleus.

The protein resides in the plastid. It is found in the chloroplast thylakoid membrane. It catalyses the reaction a plastoquinone + NADH + (n+1) H(+)(in) = a plastoquinol + NAD(+) + n H(+)(out). The catalysed reaction is a plastoquinone + NADPH + (n+1) H(+)(in) = a plastoquinol + NADP(+) + n H(+)(out). Its function is as follows. NDH shuttles electrons from NAD(P)H:plastoquinone, via FMN and iron-sulfur (Fe-S) centers, to quinones in the photosynthetic chain and possibly in a chloroplast respiratory chain. The immediate electron acceptor for the enzyme in this species is believed to be plastoquinone. Couples the redox reaction to proton translocation, and thus conserves the redox energy in a proton gradient. The protein is NAD(P)H-quinone oxidoreductase subunit J, chloroplastic of Platanus occidentalis (Sycamore).